A 159-amino-acid chain; its full sequence is Nucleotide-binding protein PSPTO_4393 (159 aa).

Belongs to the YajQ family.

Functionally, nucleotide-binding protein. The protein is Nucleotide-binding protein PSPTO_4393 of Pseudomonas syringae pv. tomato (strain ATCC BAA-871 / DC3000).